The primary structure comprises 210 residues: uncharacterized protein (210 aa).

This is an uncharacterized protein from Nostoc sp. (strain PCC 7120 / SAG 25.82 / UTEX 2576).